We begin with the raw amino-acid sequence, 147 residues long: Large ribosomal subunit protein bL9 (147 aa).

The protein belongs to the bacterial ribosomal protein bL9 family.

In terms of biological role, binds to the 23S rRNA. In Shouchella clausii (strain KSM-K16) (Alkalihalobacillus clausii), this protein is Large ribosomal subunit protein bL9.